The sequence spans 622 residues: 1-deoxy-D-xylulose-5-phosphate synthase (622 aa).

Thiamine diphosphate-binding positions include H71 and 112 to 114; that span reads GHS. D143 lines the Mg(2+) pocket. Thiamine diphosphate is bound by residues 144-145, N172, Y283, and E363; that span reads GA. N172 serves as a coordination point for Mg(2+).

The protein belongs to the transketolase family. DXPS subfamily. In terms of assembly, homodimer. It depends on Mg(2+) as a cofactor. The cofactor is thiamine diphosphate.

It catalyses the reaction D-glyceraldehyde 3-phosphate + pyruvate + H(+) = 1-deoxy-D-xylulose 5-phosphate + CO2. It functions in the pathway metabolic intermediate biosynthesis; 1-deoxy-D-xylulose 5-phosphate biosynthesis; 1-deoxy-D-xylulose 5-phosphate from D-glyceraldehyde 3-phosphate and pyruvate: step 1/1. Catalyzes the acyloin condensation reaction between C atoms 2 and 3 of pyruvate and glyceraldehyde 3-phosphate to yield 1-deoxy-D-xylulose-5-phosphate (DXP). This chain is 1-deoxy-D-xylulose-5-phosphate synthase, found in Caldanaerobacter subterraneus subsp. tengcongensis (strain DSM 15242 / JCM 11007 / NBRC 100824 / MB4) (Thermoanaerobacter tengcongensis).